The following is a 743-amino-acid chain: Dystrobrevin alpha (743 aa).

Residues 1–288 (MIEDSGKRGN…SHSNQHQMKE (288 aa)) are interaction with MAGEE1. The ZZ-type zinc-finger motif lies at 238–294 (FHPVECSYCHSESMMGFRYRCQQCHNYQLCQDCFWRGHAGGSHSNQHQMKEYTSWKS). Cys243, Cys246, Cys258, Cys261, Cys267, Cys270, His280, and His284 together coordinate Zn(2+). The syntrophin-binding region stretch occupies residues 400–450 (DRLADEHVLIGLYVNMLRNNPSCMLESSNRLDEEHRLIARYAARLAAESSS). Residues 461 to 556 (DISFTIDANK…EGLMKLLKTQ (96 aa)) adopt a coiled-coil conformation. Residues 556–575 (QGAGSPRSSPSHTISRPIPM) form a disordered region. Positions 557–569 (GAGSPRSSPSHTI) are enriched in polar residues. A Phosphoserine modification is found at Ser662.

Belongs to the dystrophin family. Dystrobrevin subfamily. Interacts with dystrophin, utrophin and the syntrophins SNTA1, SNTB1, SNTB2, SNTG1 and SNTG2. Interacts with MAGEE1. Binds dystrobrevin binding protein 1. Interacts with CTNNAL1. The interaction is required for correct localization of both CTNNAL1 and DTNA. As to quaternary structure, does not interact with dystrophin. In terms of processing, phosphorylation of DTN-1 on tyrosine kinase substrate domain present in the C-terminus. As to expression, highly expressed in brain, skeletal and cardiac muscles, and expressed at lower levels in lung, liver and pancreas. Isoform 2 is not expressed in cardiac muscle. Isoform 7 and isoform 8 are only expressed in muscle.

The protein resides in the cytoplasm. It is found in the synapse. The protein localises to the cell membrane. Functionally, may be involved in the formation and stability of synapses as well as being involved in the clustering of nicotinic acetylcholine receptors. The polypeptide is Dystrobrevin alpha (Homo sapiens (Human)).